The primary structure comprises 273 residues: Large ribosomal subunit protein uL2cz/uL2cy (273 aa).

Disordered stretches follow at residues 1–25 (MAIH…VKSN) and 224–273 (NPVD…RRRK).

It belongs to the universal ribosomal protein uL2 family. As to quaternary structure, part of the 50S ribosomal subunit.

It is found in the plastid. The protein resides in the chloroplast. This Phalaenopsis aphrodite subsp. formosana (Moth orchid) protein is Large ribosomal subunit protein uL2cz/uL2cy (rpl2-A).